A 1093-amino-acid chain; its full sequence is Semaphorin 5c (1093 aa).

The N-terminal stretch at methionine 1–glycine 34 is a signal peptide. Asparagine 48 carries N-linked (GlcNAc...) asparagine glycosylation. Positions serine 50–alanine 495 constitute a Sema domain. 2 cysteine pairs are disulfide-bonded: cysteine 118–cysteine 128 and cysteine 146–cysteine 155. Asparagine 162, asparagine 182, asparagine 285, and asparagine 295 each carry an N-linked (GlcNAc...) asparagine glycan. 2 cysteine pairs are disulfide-bonded: cysteine 271-cysteine 376 and cysteine 296-cysteine 338. N-linked (GlcNAc...) asparagine glycosylation occurs at asparagine 341. One can recognise a PSI domain in the interval histidine 497–proline 546. 3 consecutive TSP type-1 domains span residues aspartate 553 to threonine 605, histidine 607 to proline 663, and aspartate 671 to glutamine 726. A glycan (N-linked (GlcNAc...) asparagine) is linked at asparagine 603. Disulfide bonds link cysteine 619/cysteine 656, cysteine 623/cysteine 662, cysteine 634/cysteine 646, cysteine 683/cysteine 720, cysteine 687/cysteine 725, and cysteine 698/cysteine 710. Residue asparagine 745 is glycosylated (N-linked (GlcNAc...) asparagine). 3 consecutive TSP type-1 domains span residues aspartate 794 to proline 834, histidine 850 to glutamate 901, and leucine 904 to glutamate 953. Disulfide bonds link cysteine 862/cysteine 895, cysteine 866/cysteine 900, and cysteine 877/cysteine 885. The helical transmembrane segment at threonine 960–alanine 980 threads the bilayer. Asparagine 998 and asparagine 1046 each carry an N-linked (GlcNAc...) asparagine glycan. Residues proline 1018 to glutamine 1056 form a disordered region. A compositionally biased stretch (low complexity) spans asparagine 1041–asparagine 1053.

This sequence belongs to the semaphorin family. In egg chambers, high levels of expression in the follicle cells, with little to no expression in the germ cells (at protein level). In stage 3 to 7 egg chambers, planar polarized at the basal epithelial surface (at protein level).

The protein resides in the apical cell membrane. The protein localises to the lateral cell membrane. It is found in the endosome. Its function is as follows. Regulates the motility of migrating epithelial cells by providing guidance cues within the migratory environment and may also play a role in development of the olfactory system. May act as a positive axonal guidance cue. Function in neurons is essential for adult survival and is important for climbing behavior. Promotes collective migration of follicular epithelial cells in egg chambers, likely by acting at the leading edge of the basal epithelium cells to provide guidance cues across the cell boundary to the trailing edge of the cell ahead. The transmembrane receptor PlexA on the trailing edge of the cell ahead, appears to transduce this signal to suppress the formation of protrusions. Involved in olfactory avoidance behavior. In Drosophila melanogaster (Fruit fly), this protein is Semaphorin 5c.